The primary structure comprises 393 residues: Flap endonuclease 1 (393 aa).

The interval 1–108 (MGVLGLSKLL…SELESRRQRA (108 aa)) is N-domain. Asp-34 lines the Mg(2+) pocket. Position 74 (Arg-74) interacts with DNA. Mg(2+) is bound at residue Asp-90. The segment covering 99–120 (SELESRRQRAEDAKHEFEKAKE) has biased composition (basic and acidic residues). The tract at residues 99 to 127 (SELESRRQRAEDAKHEFEKAKEEGDDEAM) is disordered. The tract at residues 126–257 (AMEKMSKRMV…HKAWEGIKKY (132 aa)) is I-domain. Mg(2+) is bound by residues Glu-162, Glu-164, Asp-183, and Asp-185. DNA is bound at residue Glu-162. Residues Gly-235 and Asp-237 each coordinate DNA. Residue Asp-237 participates in Mg(2+) binding. Positions 340–348 (TQGRLDQFF) are interaction with PCNA. The segment at 358–393 (NSEASTAGTKRNRGAVALPGVLQRKSSSGHKKAVKK) is disordered. Over residues 384-393 (SSGHKKAVKK) the composition is skewed to basic residues.

This sequence belongs to the XPG/RAD2 endonuclease family. FEN1 subfamily. Interacts with PCNA. Three molecules of FEN1 bind to one PCNA trimer with each molecule binding to one PCNA monomer. PCNA stimulates the nuclease activity without altering cleavage specificity. It depends on Mg(2+) as a cofactor. Phosphorylated. Phosphorylation upon DNA damage induces relocalization to the nuclear plasma.

Its subcellular location is the nucleus. It is found in the nucleolus. It localises to the nucleoplasm. The protein localises to the mitochondrion. Structure-specific nuclease with 5'-flap endonuclease and 5'-3' exonuclease activities involved in DNA replication and repair. During DNA replication, cleaves the 5'-overhanging flap structure that is generated by displacement synthesis when DNA polymerase encounters the 5'-end of a downstream Okazaki fragment. It enters the flap from the 5'-end and then tracks to cleave the flap base, leaving a nick for ligation. Also involved in the long patch base excision repair (LP-BER) pathway, by cleaving within the apurinic/apyrimidinic (AP) site-terminated flap. Acts as a genome stabilization factor that prevents flaps from equilibrating into structures that lead to duplications and deletions. Also possesses 5'-3' exonuclease activity on nicked or gapped double-stranded DNA, and exhibits RNase H activity. Also involved in replication and repair of rDNA and in repairing mitochondrial DNA. This Trypanosoma brucei brucei (strain 927/4 GUTat10.1) protein is Flap endonuclease 1.